Consider the following 162-residue polypeptide: Protein-export protein SecB (162 aa).

The protein belongs to the SecB family. As to quaternary structure, homotetramer, a dimer of dimers. One homotetramer interacts with 1 SecA dimer.

It is found in the cytoplasm. One of the proteins required for the normal export of preproteins out of the cell cytoplasm. It is a molecular chaperone that binds to a subset of precursor proteins, maintaining them in a translocation-competent state. It also specifically binds to its receptor SecA. This chain is Protein-export protein SecB, found in Pseudomonas syringae pv. syringae (strain B728a).